The primary structure comprises 134 residues: Replication enhancer protein (134 aa).

The protein belongs to the geminiviridae replication enhancer protein family. In terms of assembly, homooligomer. Interacts with the replication-associated protein (REP). Interacts with host proliferating cell nuclear antigen (PCNA). Interacts with host retinoblastoma-related protein 1 (RBR1), and may thereby deregulate the host cell cycle. Oligomerization and interaction with PCNA are necessary for optimal replication enhancement.

Increases viral DNA accumulation. Enhances infectivity and symptom expression. The sequence is that of Replication enhancer protein from Solanum lycopersicum (Tomato).